Consider the following 65-residue polypeptide: Large ribosomal subunit protein uL29 (65 aa).

This sequence belongs to the universal ribosomal protein uL29 family.

The chain is Large ribosomal subunit protein uL29 from Lactobacillus helveticus (strain DPC 4571).